The sequence spans 458 residues: Glycine--tRNA ligase (458 aa).

Residues Arg97 and Glu171 each contribute to the substrate site. Residues 203–205 (RNE), 213–218 (FRTREF), 287–288 (EL), and 331–334 (GADR) contribute to the ATP site. A substrate-binding site is contributed by 218–222 (FEQME). 327-331 (EPSLG) provides a ligand contact to substrate.

Belongs to the class-II aminoacyl-tRNA synthetase family. As to quaternary structure, homodimer.

The protein localises to the cytoplasm. It carries out the reaction tRNA(Gly) + glycine + ATP = glycyl-tRNA(Gly) + AMP + diphosphate. Its function is as follows. Catalyzes the attachment of glycine to tRNA(Gly). The sequence is that of Glycine--tRNA ligase from Bacillus anthracis.